Here is a 91-residue protein sequence, read N- to C-terminus: Large ribosomal subunit protein uL23c (91 aa).

It belongs to the universal ribosomal protein uL23 family. Part of the 50S ribosomal subunit.

The protein localises to the plastid. It is found in the chloroplast. Functionally, binds to 23S rRNA. The polypeptide is Large ribosomal subunit protein uL23c (rpl23) (Chaetosphaeridium globosum (Charophycean green alga)).